The following is a 240-amino-acid chain: ATP-dependent dethiobiotin synthetase BioD (240 aa).

15 to 20 (EIGKTF) is a binding site for ATP. Residue Thr-19 coordinates Mg(2+). Lys-40 is a catalytic residue. ATP is bound by residues Asp-57, 118-121 (EGVG), and 178-179 (NR). Residues Asp-57 and Glu-118 each contribute to the Mg(2+) site.

It belongs to the dethiobiotin synthetase family. Homodimer. Mg(2+) is required as a cofactor.

The protein resides in the cytoplasm. It catalyses the reaction (7R,8S)-7,8-diammoniononanoate + CO2 + ATP = (4R,5S)-dethiobiotin + ADP + phosphate + 3 H(+). It functions in the pathway cofactor biosynthesis; biotin biosynthesis; biotin from 7,8-diaminononanoate: step 1/2. Functionally, catalyzes a mechanistically unusual reaction, the ATP-dependent insertion of CO2 between the N7 and N8 nitrogen atoms of 7,8-diaminopelargonic acid (DAPA, also called 7,8-diammoniononanoate) to form a ureido ring. This chain is ATP-dependent dethiobiotin synthetase BioD, found in Burkholderia thailandensis (strain ATCC 700388 / DSM 13276 / CCUG 48851 / CIP 106301 / E264).